A 967-amino-acid chain; its full sequence is Sarcosine oxidase subunit alpha (967 aa).

A141, D160, E161, R162, S168, V207, A420, and T427 together coordinate NAD(+). (6R)-5,10-methylene-5,6,7,8-tetrahydrofolate contacts are provided by T694 and E786.

Belongs to the GcvT family. In terms of assembly, heterotetramer composed of subunits alpha (SoxA), beta (SoxB), gamma (SoxG) and delta (SoxD). It depends on NAD(+) as a cofactor.

Its subcellular location is the cytoplasm. It carries out the reaction sarcosine + (6S)-5,6,7,8-tetrahydrofolate + O2 = (6R)-5,10-methylene-5,6,7,8-tetrahydrofolate + glycine + H2O2. It catalyses the reaction sarcosine + O2 + H2O = formaldehyde + glycine + H2O2. In the presence of tetrahydrofolate, catalyzes the oxidative demethylation of sarcosine to yield glycine, 5,10-methylenetetrahydrofolate and hydrogen peroxide. In the absence of tetrahydrofolate, catalyzes the oxidative demethylation of sarcosine to yield glycine, formaldehyde and hydrogen peroxide. The sequence is that of Sarcosine oxidase subunit alpha from Corynebacterium sp. (strain P-1).